Consider the following 154-residue polypeptide: 6,7-dimethyl-8-ribityllumazine synthase (154 aa).

5-amino-6-(D-ribitylamino)uracil is bound by residues phenylalanine 22, alanine 56–glutamate 58, and alanine 80–isoleucine 82. Glutamate 85–threonine 86 is a (2S)-2-hydroxy-3-oxobutyl phosphate binding site. Residue histidine 88 is the Proton donor of the active site. Phenylalanine 113 lines the 5-amino-6-(D-ribitylamino)uracil pocket. Arginine 127 serves as a coordination point for (2S)-2-hydroxy-3-oxobutyl phosphate.

This sequence belongs to the DMRL synthase family.

The catalysed reaction is (2S)-2-hydroxy-3-oxobutyl phosphate + 5-amino-6-(D-ribitylamino)uracil = 6,7-dimethyl-8-(1-D-ribityl)lumazine + phosphate + 2 H2O + H(+). The protein operates within cofactor biosynthesis; riboflavin biosynthesis; riboflavin from 2-hydroxy-3-oxobutyl phosphate and 5-amino-6-(D-ribitylamino)uracil: step 1/2. Catalyzes the formation of 6,7-dimethyl-8-ribityllumazine by condensation of 5-amino-6-(D-ribitylamino)uracil with 3,4-dihydroxy-2-butanone 4-phosphate. This is the penultimate step in the biosynthesis of riboflavin. In Thermoanaerobacter pseudethanolicus (strain ATCC 33223 / 39E) (Clostridium thermohydrosulfuricum), this protein is 6,7-dimethyl-8-ribityllumazine synthase.